A 598-amino-acid chain; its full sequence is Nuclear receptor subfamily 4 group A member 1 (598 aa).

Disordered stretches follow at residues 1–50 and 120–159; these read MPCI…PTAL and LDET…GSFG. Composition is skewed to low complexity over residues 37–50 and 134–145; these read LASP…PTAL and SPCSAPSPSTPS. Residues 171–466 form a required for nuclear import region; it reads RAWTEQLPKA…PAEGKLIFCS (296 aa). The segment at residues 264-339 is a DNA-binding region (nuclear receptor); that stretch reads EGRCAVCGDN…VGMVKEVVRT (76 aa). NR C4-type zinc fingers lie at residues 267 to 287 and 303 to 327; these read CAVC…CEGC and CLAN…FQKC. Residues 268 to 354 form a required for binding NBRE-containing DNA region; that stretch reads AVCGDNASCQ…RRGRLPSKPK (87 aa). Residues 299–361 form a required for the interaction with RXRA region; sequence AKYICLANKD…KPKQPPDASP (63 aa). Residue serine 341 is modified to Phosphoserine; by PKA. Residues 341 to 361 form a disordered region; it reads SLKGRRGRLPSKPKQPPDASP. Serine 351 is modified (phosphoserine; by PKA, RPS6KA1 and RPS6KA3). Residues 360 to 595 form the NR LBD domain; it reads SPANLLTSLV…PIVDKIFMDT (236 aa). A binds lipopolysaccharide region spans residues 521–544; sequence PRRVEELQNRIASCLKEHVSAVAG. The interval 584-595 is AF-2; it reads PPPIVDKIFMDT.

The protein belongs to the nuclear hormone receptor family. NR4 subfamily. As to quaternary structure, binds the NGFI-B response element (NBRE) as a monomer. Binds the Nur response element (NurRE), consisting of two inverse NBRE-related octanucleotide repeats separated by 6 base-pairs, as a dimer. Interacts (via N-terminus) with NLRP3 (via LRR repeat domain); the interaction is direct, requires binding of NR4A1/Nur77 to NBRE-containing dsDNA and lipopolysaccharide, and leads to non-canonical NLRP3 inflammasome activation. Interacts with GADD45GIP1. Interacts with STK11. Heterodimer (via DNA-binding domain) with RXRA (via C-terminus); DNA-binding of the heterodimer is enhanced by 9-cis retinoic acid. Competes for the RXRA interaction with EP300 and thereby attenuates EP300 mediated acetylation of RXRA. Interacts with NCOA1. Interacts with NCOA2. Interacts with NCOA3. Zn(2+) serves as cofactor. Phosphorylated at Ser-351 by RPS6KA1 and RPS6KA3 in response to mitogenic or stress stimuli. Post-translationally, acetylated by p300/CBP, acetylation increases stability. Deacetylated by HDAC1.

The protein localises to the cytoplasm. Its subcellular location is the cytosol. It localises to the nucleus. It is found in the mitochondrion. Orphan nuclear receptor. Binds the NGFI-B response element (NBRE) 5'-AAAGGTCA-3'. Binds 9-cis-retinoic acid outside of its ligand-binding (NR LBD) domain. Participates in energy homeostasis by sequestrating the kinase STK11 in the nucleus, thereby attenuating cytoplasmic AMPK activation. Regulates the inflammatory response in macrophages by regulating metabolic adaptations during inflammation, including repressing the transcription of genes involved in the citric acid cycle (TCA). Inhibits NF-kappa-B signaling by binding to low-affinity NF-kappa-B binding sites, such as at the IL2 promoter. May act concomitantly with NR4A2 in regulating the expression of delayed-early genes during liver regeneration. Plays a role in the vascular response to injury. Functionally, in the cytosol, upon its detection of both bacterial lipopolysaccharide (LPS) and NBRE-containing mitochondrial DNA released by GSDMD pores during pyroptosis, it promotes non-canonical NLRP3 inflammasome activation by stimulating association of NLRP3 and NEK7. This is Nuclear receptor subfamily 4 group A member 1 (NR4A1) from Canis lupus familiaris (Dog).